Consider the following 122-residue polypeptide: Large ribosomal subunit protein uL14 (122 aa).

Belongs to the universal ribosomal protein uL14 family. Part of the 50S ribosomal subunit. Forms a cluster with proteins L3 and L19. In the 70S ribosome, L14 and L19 interact and together make contacts with the 16S rRNA in bridges B5 and B8.

Binds to 23S rRNA. Forms part of two intersubunit bridges in the 70S ribosome. This Pseudoalteromonas translucida (strain TAC 125) protein is Large ribosomal subunit protein uL14.